Here is a 195-residue protein sequence, read N- to C-terminus: Imidazoleglycerol-phosphate dehydratase (195 aa).

This sequence belongs to the imidazoleglycerol-phosphate dehydratase family.

Its subcellular location is the cytoplasm. The catalysed reaction is D-erythro-1-(imidazol-4-yl)glycerol 3-phosphate = 3-(imidazol-4-yl)-2-oxopropyl phosphate + H2O. It functions in the pathway amino-acid biosynthesis; L-histidine biosynthesis; L-histidine from 5-phospho-alpha-D-ribose 1-diphosphate: step 6/9. In Maridesulfovibrio salexigens (strain ATCC 14822 / DSM 2638 / NCIMB 8403 / VKM B-1763) (Desulfovibrio salexigens), this protein is Imidazoleglycerol-phosphate dehydratase.